We begin with the raw amino-acid sequence, 218 residues long: N-(5'-phosphoribosyl)anthranilate isomerase (218 aa).

Belongs to the TrpF family.

The catalysed reaction is N-(5-phospho-beta-D-ribosyl)anthranilate = 1-(2-carboxyphenylamino)-1-deoxy-D-ribulose 5-phosphate. Its pathway is amino-acid biosynthesis; L-tryptophan biosynthesis; L-tryptophan from chorismate: step 3/5. The polypeptide is N-(5'-phosphoribosyl)anthranilate isomerase (Bacillus licheniformis (strain ATCC 14580 / DSM 13 / JCM 2505 / CCUG 7422 / NBRC 12200 / NCIMB 9375 / NCTC 10341 / NRRL NRS-1264 / Gibson 46)).